Here is a 117-residue protein sequence, read N- to C-terminus: Zinc metalloproteinase/disintegrin (117 aa).

Positions 36–117 (TPVSGNELLE…AGCPRNPFHA (82 aa)) constitute a Disintegrin domain. Intrachain disulfides connect C50–C65, C52–C60, C59–C82, C73–C79, C78–C103, and C91–C110. Residues 95–97 (RGD) carry the Cell attachment site motif.

Belongs to the venom metalloproteinase (M12B) family. P-II subfamily. P-IIa sub-subfamily. In terms of assembly, monomer. Requires Zn(2+) as cofactor. Expressed by the venom gland.

It is found in the secreted. Its function is as follows. Impairs hemostasis in the envenomed animal. In terms of biological role, inhibits platelet aggregation and bone resorption. The protein is Zinc metalloproteinase/disintegrin of Gloydius halys (Chinese water mocassin).